The sequence spans 213 residues: Nucleolar protein 12 (213 aa).

Positions 32 to 95 (GFHKRKVERK…RLVTAKTESV (64 aa)) form a coiled coil. The tract at residues 117–213 (ARLLGLPTPE…LTGKARHSGE (97 aa)) is disordered. Composition is skewed to basic residues over residues 169-181 (AHSRKKVKKKRLR) and 197-213 (SKTRRRRLTGKARHSGE).

This sequence belongs to the RRP17 family. In terms of assembly, interacts with KIAA1191.

It is found in the nucleus. The protein resides in the nucleolus. Its subcellular location is the cytoplasm. Multifunctional RNA binding protein that plays a role in RNA metabolism and DNA maintenance. Participates in the resolution of DNA stress and the maintenance of genome integrity by localizing to sites of DNA insults. Also plays a role in proper nucleolar organization by limiting nucleolar size and regulating nucleolar number. Mechanistically, regulates the nucleolar levels of fibrillarin and nucleolin, two key players in pre-rRNA processing and ribosome assembly. The chain is Nucleolar protein 12 (NOL12) from Bos taurus (Bovine).